The sequence spans 535 residues: Succinate-semialdehyde dehydrogenase, mitochondrial (535 aa).

The N-terminal 47 residues, 1–47 (MATCIWLRSCGARRLGWTFPGCRLRPRAGGLVPASGPAPGPAQLRCY), are a transit peptide targeting the mitochondrion. At Lys-126 the chain carries N6-acetyllysine; alternate. N6-succinyllysine; alternate is present on Lys-126. 2 positions are modified to N6-succinyllysine: Lys-135 and Lys-184. NAD(+)-binding positions include Arg-213 and 228–231 (KPAE). Arg-213 is a binding site for substrate. Lys-265 carries the N6-acetyllysine; alternate modification. N6-succinyllysine; alternate is present on Lys-265. 284–289 (GSTTTG) is an NAD(+) binding site. The active-site Proton acceptor is the Glu-306. Position 334 (Arg-334) interacts with substrate. The active-site Nucleophile is the Cys-340. An intrachain disulfide couples Cys-340 to Cys-342. At Lys-365 the chain carries N6-acetyllysine. Lys-402 carries the N6-succinyllysine modification. At Lys-411 the chain carries N6-acetyllysine. Ser-498 serves as a coordination point for substrate. Ser-499 carries the phosphoserine modification.

This sequence belongs to the aldehyde dehydrogenase family. As to quaternary structure, homotetramer.

The protein localises to the mitochondrion. It carries out the reaction succinate semialdehyde + NAD(+) + H2O = succinate + NADH + 2 H(+). It functions in the pathway amino-acid degradation; 4-aminobutanoate degradation. Redox-regulated. Inhibited under oxydizing conditions. Its function is as follows. Catalyzes one step in the degradation of the inhibitory neurotransmitter gamma-aminobutyric acid (GABA). The sequence is that of Succinate-semialdehyde dehydrogenase, mitochondrial (ALDH5A1) from Pan paniscus (Pygmy chimpanzee).